Reading from the N-terminus, the 105-residue chain is Pyrimidine/purine nucleoside phosphorylase (105 aa).

This sequence belongs to the nucleoside phosphorylase PpnP family.

It catalyses the reaction a purine D-ribonucleoside + phosphate = a purine nucleobase + alpha-D-ribose 1-phosphate. The catalysed reaction is adenosine + phosphate = alpha-D-ribose 1-phosphate + adenine. The enzyme catalyses cytidine + phosphate = cytosine + alpha-D-ribose 1-phosphate. It carries out the reaction guanosine + phosphate = alpha-D-ribose 1-phosphate + guanine. It catalyses the reaction inosine + phosphate = alpha-D-ribose 1-phosphate + hypoxanthine. The catalysed reaction is thymidine + phosphate = 2-deoxy-alpha-D-ribose 1-phosphate + thymine. The enzyme catalyses uridine + phosphate = alpha-D-ribose 1-phosphate + uracil. It carries out the reaction xanthosine + phosphate = alpha-D-ribose 1-phosphate + xanthine. Its function is as follows. Catalyzes the phosphorolysis of diverse nucleosides, yielding D-ribose 1-phosphate and the respective free bases. Can use uridine, adenosine, guanosine, cytidine, thymidine, inosine and xanthosine as substrates. Also catalyzes the reverse reactions. The protein is Pyrimidine/purine nucleoside phosphorylase of Cupriavidus pinatubonensis (strain JMP 134 / LMG 1197) (Cupriavidus necator (strain JMP 134)).